A 532-amino-acid chain; its full sequence is Undecaprenyl-phosphate glucose phosphotransferase (532 aa).

Helical transmembrane passes span 81–101 (QVVV…CIAW), 110–130 (ELSG…FLFP), 155–175 (VAFG…PFGV), 183–203 (WLTF…YILH), and 344–364 (TASV…ALAI).

This sequence belongs to the bacterial sugar transferase family.

It localises to the membrane. The catalysed reaction is di-trans,octa-cis-undecaprenyl phosphate + UDP-alpha-D-glucose = alpha-D-glucosyl di-trans,octa-cis-undecaprenyl diphosphate + UMP. Involved in the biosynthesis of the exopolysaccharide acetan, a water-soluble polysaccharide involved in production of bacterial cellulose (BC). This Komagataeibacter xylinus (Gluconacetobacter xylinus) protein is Undecaprenyl-phosphate glucose phosphotransferase (aceA).